Here is a 126-residue protein sequence, read N- to C-terminus: Precursor of CEP2 (126 aa).

An N-terminal signal peptide occupies residues 1-19 (MKLFIITVVTILTISRVFD). The propeptide occupies 20 to 80 (KTPATTEARK…ENNLKNRFIN (61 aa)). Hydroxyproline occurs at positions 84 and 87. Residues 96-105 (PRVLNNKFTN) constitute a propeptide that is removed on maturation. A hydroxyproline mark is found at proline 109, proline 112, and proline 116. A propeptide spanning residues 121–126 (PGVVNV) is cleaved from the precursor.

This sequence belongs to the C-terminally encoded plant signaling peptide (CEP) family. As to quaternary structure, interacts with CEP receptors (e.g. CEPR1 and CEPR2). In terms of processing, the mature small signaling peptide is generated by proteolytic processing of the longer precursor. As to expression, mostly expressed in roots. Present in cotyledons, shoot apical meristem (SAM), leaves, inflorescence stems and flowers.

Its subcellular location is the secreted. The protein localises to the extracellular space. It localises to the apoplast. Extracellular signaling peptide that represses primary root growth rate. Negatively regulates the number of leaves and flowering, and modulates leaf morphology. Regulates systemic nitrogen (N)-demand signaling. Mediates up-regulation of genes involved in N uptake and assimilation pathways. This chain is Precursor of CEP2, found in Arabidopsis thaliana (Mouse-ear cress).